Consider the following 486-residue polypeptide: MKVVFVSYEVFPFAKVGGLADVAGTLPKYLKKHGVDVTIVMPKHRIVEKNAEKFGYEIKKVAESLSVSHVKTDQKFDIYESVLPGSDVKTYFVANDYYFSAEDVYAGPDLGEQAIFFCAATLDLVKHLDLKPDIVHVNDWQTALIPVYLKTVYRDDPYFSRTATVLTIHNLGYQGVFDPKYLSFAGLPDYVYTIDGLEFYGQLNFLKGGIVFSDVINTVSPTYAEEIQTEEYGEKLDGVLRMRSKDLYGILNGIDYELYNPATDRYIYVNYDVNRLELKWENKVKLQEELGLPVNKETAVAGLISRLVPQKGLDLLVDVMDYLTLFDLQIVVLGTGDEQYENAFRKFQERYPDKVSANIKFDVELAQKIYAGADIFLMPSRYEPCGLGQMFSMRYGTIPVVRYTGGLADTVKEYDPQSMEGTGFGFKKYDSAHLLKAVSKALHFYYREKDHWRRIMTNAMNTDLSWDRSAKEYVDLYKKALAKVGR.

Lys15 is a binding site for ADP-alpha-D-glucose.

Belongs to the glycosyltransferase 1 family. Bacterial/plant glycogen synthase subfamily.

It carries out the reaction [(1-&gt;4)-alpha-D-glucosyl](n) + ADP-alpha-D-glucose = [(1-&gt;4)-alpha-D-glucosyl](n+1) + ADP + H(+). The protein operates within glycan biosynthesis; glycogen biosynthesis. Its function is as follows. Synthesizes alpha-1,4-glucan chains using ADP-glucose. In Thermotoga maritima (strain ATCC 43589 / DSM 3109 / JCM 10099 / NBRC 100826 / MSB8), this protein is Glycogen synthase.